The sequence spans 90 residues: ESAT-6-like protein EsxE (90 aa).

This sequence belongs to the WXG100 family. ESAT-6 subfamily.

The protein resides in the secreted. This Mycobacterium tuberculosis (strain CDC 1551 / Oshkosh) protein is ESAT-6-like protein EsxE.